We begin with the raw amino-acid sequence, 201 residues long: Glycolipid transfer protein (201 aa).

Residues 28 to 168 (IATTQFLEAC…KDFYAKLGDD (141 aa)) are glycolipid transfer protein homology domain.

Functionally, cargo transport protein that plays a key role in transport and secretion of liamocins, glycolipids (also called heavy oils) composed of a single mannitol or arabitol headgroup linked to either three, four or even six 3,5-dihydroxydecanoic ester tail-groups. In Aureobasidium melanogenum (Aureobasidium pullulans var. melanogenum), this protein is Glycolipid transfer protein.